The sequence spans 130 residues: Small ribosomal subunit protein uS8 (130 aa).

Belongs to the universal ribosomal protein uS8 family. Part of the 30S ribosomal subunit. Contacts proteins S5 and S12.

In terms of biological role, one of the primary rRNA binding proteins, it binds directly to 16S rRNA central domain where it helps coordinate assembly of the platform of the 30S subunit. This chain is Small ribosomal subunit protein uS8, found in Actinobacillus pleuropneumoniae serotype 5b (strain L20).